The sequence spans 540 residues: Mitochondrial antiviral-signaling protein (540 aa).

Proline 2 bears the N-acetylproline mark. The Cytoplasmic segment spans residues 2–513; sequence PFAEDKTYKY…REVPCHRPSP (512 aa). Glycyl lysine isopeptide (Lys-Gly) (interchain with G-Cter in ubiquitin) cross-links involve residues lysine 7 and lysine 10. In terms of domain architecture, CARD spans 10-77; it reads KYICRNFSNF…WVEYFIAALR (68 aa). The tract at residues 10–77 is required for interaction with NLRX1; the sequence is KYICRNFSNF…WVEYFIAALR (68 aa). A lipid anchor (S-palmitoyl cysteine) is attached at cysteine 79. Residues 95 to 297 form a disordered region; sequence YQPRTSDRPP…EAPANSLPSK (203 aa). The segment covering 106-122 has biased composition (pro residues); the sequence is PLEPPSLPAERPGPPTP. The tract at residues 143 to 147 is interaction with TRAF2; sequence PVQET. Composition is skewed to polar residues over residues 145–165 and 179–216; these read QETQ…QTLS and ESSS…SLTP. Residues serine 152, serine 157, serine 165, serine 180, and serine 188 each carry the phosphoserine modification. Residues 153 to 158 are interaction with TRAF6; that stretch reads PGENSE. The residue at position 215 (threonine 215) is a Phosphothreonine. Serine 222 and serine 233 each carry phosphoserine. Threonine 234 carries the phosphothreonine modification. Arginine 236 is subject to Asymmetric dimethylarginine. Residues 241 to 266 show a composition bias toward low complexity; it reads PGPTGSVVSTGTSFSSSSPGLASAGA. Phosphoserine is present on residues serine 253 and serine 258. Residues lysine 311 and lysine 325 each participate in a glycyl lysine isopeptide (Lys-Gly) (interchain with G-Cter in ubiquitin) cross-link. 2 disordered regions span residues 314–358 and 373–419; these read ANPA…RAGM and SAST…SELS. 3 stretches are compositionally biased toward polar residues: residues 317-331, 339-355, and 373-382; these read ASVS…TSSK, NALT…NSTR, and SASTVPTDGS. Over residues 388-403 the composition is skewed to low complexity; that stretch reads TPAAPTPAGATGGSSA. Serine 408 carries the post-translational modification Phosphoserine. Positions 439-442 match the pLxIS motif motif; it reads LAIS. Serine 442 bears the Phosphoserine; by TBK1 mark. Positions 455 to 460 are interaction with TRAF6; that stretch reads PEENEY. Glycyl lysine isopeptide (Lys-Gly) (interchain with G-Cter in ubiquitin) cross-links involve residues lysine 461 and lysine 500. Lysine 461 is covalently cross-linked ((Microbial infection) Glycyl lysine isopeptide (Lys-Gly) (interchain with G-Cter in UFM1)). The disordered stretch occupies residues 476–507; the sequence is IQLLEGNPGPPADPDGGPRPQADRKFQEREVP. Residues 496–507 are compositionally biased toward basic and acidic residues; sequence QADRKFQEREVP. The chain crosses the membrane as a helical span at residues 514-534; it reads GALWLQVAVTGVLVVTLLVVL. The Mitochondrial intermembrane portion of the chain corresponds to 535 to 540; sequence YRRRLH.

In terms of assembly, self-associates and polymerizes (via CARD domains) to form 400 nM long three-stranded helical filaments on mitochondria, filament nucleation requires interaction with RIGI whose CARD domains act as a template for filament assembly. Interacts with RIGI, IFIH1/MDA5, TRAF2, TRAF6 and C1QBP. May interact with FADD, RIPK1, CHUK and IKBKB. Interacts (when phosphorylated) with IRF3; following activation and phosphorylation on the pLxIS motif by TBK1, recruits IRF3. Interacts with NLRX1. Interaction with NLRX1 requires the CARD domain. Interacts with PSMA7. Interacts with TRAFD1. Interacts (via C-terminus) with PCBP2 in a complex containing MAVS/IPS1, PCBP2 and ITCH. Interacts with CYLD. Interacts with SRC. Interacts with DHX58/LGP2 and IKBKE. Interacts with STING1. Interacts with IFIT3 (via N-terminus). Interacts with TBK1 only in the presence of IFIT3. Interacts with TTLL12; the interaction prevents MAVS binding to TBK1 and IKBKE. Interacts with MUL1. Interacts with ANKRD17. Interacts with NDFIP1. Interacts with SMURF1; the interaction is mediated by NDFIP1 and leads to MAVS ubiquitination and degradation. Interacts with UBXN1; this interaction inhibits MAVS-mediated antiviral pathway. Interacts (via C-terminus) with GPATCH3; the interaction is markedly increased upon viral infection. Directly interacts (via CARD domain) with ATG5 and ATG12, either as ATG5 and ATG12 monomers or as ATG12-ATG5 conjugates. Interacts with DHX33 (via the helicase C-terminal domain). Interacts with DDX3X (via C-terminus); this interaction occurs rapidly, but transiently after Sendai virus infection. The interaction with DDX3X potentiates MAVS-mediated IFNB induction. Conversely inhibition of this interaction, for instance by HCV core protein, prevents MAVS-mediated IFNB induction. Transiently interacts with TRAF3 early during Sendai virus infection. Interacts with CLPB; the interaction is enhanced by Sendai virus infection. Interacts with TRAF3IP3. Interacts with TOMM70; the interaction is enhanced by Sendai virus infection. Interacts with ZNFX1. Interacts with N4BP3; this interaction promotes the polyubiquitination of MAVS. Interacts with TAX1BP1; this interaction induces MAVS polyubiquitination. Interacts with NLRP3; promoting NLRP3 recruitment to mitochondria and activation of the NLRP3 inflammasome. Interacts with ECSIT; this interaction bridges RIGI to the MAVS complex at the mitochondrion. Interacts with UBL7; this interaction promotes MAVS 'Lys-27'-linked ubiquitination leading to type I interferon production. Interacts (via transmembrane domain) with SMIM30/MAVI1 (via transmembrane domain); the interaction disrupts MAVS interaction with RIGI and inhibits MAVS aggregation, resulting in the repression of type I interferon signaling and innate immune responses. As to quaternary structure, (Microbial infection) Interacts with hepatitis C virus (HCV) NS3/4A protease; this interaction leads to MAVS cleavage, thereby preventing the establishment of an antiviral state. (Microbial infection) Interacts with hepatitis GB virus B NS3/4A protease; this interaction leads to MAVS cleavage. In terms of assembly, (Microbial infection) Interacts with human respiratory syncytial virus/HRSV protein NS1; this interaction disrupts MAVS binding to RIGI. As to quaternary structure, (Microbial infection) Interacts with Andes virus Nnon-structural protein NS-S; this interaction may reduce MAVS ubiquitination and leads to inhibition of MAVS-induced type-I IFN signaling pathway. (Microbial infection) Interacts with Seneca Valley virus protease 3C; this interaction allows the cleavage of MAVS and subsequent suppression of host innate immunity. In terms of assembly, (Microbial infection) Interacts with SARS-CoV virus protein ORF9b; this interaction mediates MAVS proteasomal degradation. As to quaternary structure, (Microbial infection) Interacts with SARS-CoV-2 virus protein M; this interaction impairs MAVS self-association and its recruitment of downstream components. (Microbial infection) Interacts with foot-and-mouth disease virus protein VP1; this interaction competes with TRAF3 interaction to MAVS leading to suppression of host innate immunity. In terms of assembly, (Microbial infection) Interacts with Epstein-Barr virus protein BILF1; this interaction mediates MAVS routing from mitochondria to lysosomes. Following activation, phosphorylated by TBK1 at Ser-442 in the pLxIS motif. The phosphorylated pLxIS motif constitutes an IRF3-binding motif, leading to recruitment of the transcription factor IRF3 to induce type-I interferons and other cytokines. In terms of processing, ubiquitinated. Undergoes 'Lys-48'-linked polyubiquitination catalyzed by ITCH; ITCH-dependent polyubiquitination is mediated by the interaction with PCBP2 and leads to MAVS/IPS1 proteasomal degradation. Ubiquitinated by RNF125, leading to its degradation by the proteasome. Undergoes 'Lys-48'-linked ubiquitination catalyzed by SMURF1. Undergoes 'Lys-48'-linked ubiquitination catalyzed by MARCHF5 at Lys-7 and Lys-500, leading to proteasomal degradation. Ubiquitinated via 'Lys-63'-linked ubiquitination at Lys-10, Lys-311 and Lys-461 by UBE2N and TRIM31, promoting MAVS polymerization and formation of three-stranded helical filaments on mitochondria. Undergoes 'Lys-63'-linked ubiquitination leading to enhanced interaction between MAVS and TRAF2. Undergoes 'Lys-27'-linked ubiquitination by TRIM21 leading to enhanced interaction between MAVS and TBK1. Deubiquitinated by USP10 leading to attenuation of RIGI-mediated MAVS aggregation and production of type I interferon. Undergoes 'Lys-48'-linked polyubiquitination catalyzed by RNF115 leading to its degradation. Post-translationally, palmitoylated by ZHDDC4. Palmitoylation promotes MAVS stabilization and activation by inhibiting 'Lys-48'- but facilitating 'Lys-63'-linked ubiquitination. Proteolytically cleaved by apoptotic caspases during apoptosis, leading to its inactivation. Cleavage by CASP3 during virus-induced apoptosis inactivates it, preventing cytokine overproduction. In terms of processing, (Microbial infection) Cleaved and degraded by hepatitis A virus (HAV) protein 3ABC allowing the virus to disrupt the activation of host IRF3 through the MDA5 pathway. Post-translationally, (Microbial infection) Cleaved by the protease 2A of coxsackievirus B3, poliovirus and enterovirus 71 allowing the virus to disrupt the host type I interferon production. (Microbial infection) Cleaved by Seneca Valley virus protease 3C allowing the virus to suppress interferon type-I production. In terms of processing, (Microbial infection) Cleaved by HCV protease NS3/4A, thereby preventing the establishment of an antiviral state. Post-translationally, (Microbial infection) UFMylated by ULF1 in association with Epstein-Barr virus BILF1; leading to MAVS routing to the lysosome. In terms of tissue distribution, present in T-cells, monocytes, epithelial cells and hepatocytes (at protein level). Ubiquitously expressed, with highest levels in heart, skeletal muscle, liver, placenta and peripheral blood leukocytes.

The protein localises to the mitochondrion outer membrane. It localises to the mitochondrion. Its subcellular location is the peroxisome. Its function is as follows. Adapter required for innate immune defense against viruses. Acts downstream of DHX33, RIGI and IFIH1/MDA5, which detect intracellular dsRNA produced during viral replication, to coordinate pathways leading to the activation of NF-kappa-B, IRF3 and IRF7, and to the subsequent induction of antiviral cytokines such as IFNB and RANTES (CCL5). Peroxisomal and mitochondrial MAVS act sequentially to create an antiviral cellular state. Upon viral infection, peroxisomal MAVS induces the rapid interferon-independent expression of defense factors that provide short-term protection, whereas mitochondrial MAVS activates an interferon-dependent signaling pathway with delayed kinetics, which amplifies and stabilizes the antiviral response. May activate the same pathways following detection of extracellular dsRNA by TLR3. May protect cells from apoptosis. Involved in NLRP3 inflammasome activation by mediating NLRP3 recruitment to mitochondria. The chain is Mitochondrial antiviral-signaling protein from Homo sapiens (Human).